A 416-amino-acid polypeptide reads, in one-letter code: Phosphatidylserine decarboxylase proenzyme, mitochondrial (416 aa).

Topologically, residues 1–67 (MPGKSTRPLP…GRLHFPQLAL (67 aa)) are mitochondrial matrix. The chain crosses the membrane as a helical span at residues 68 to 86 (RRRLGQLSCMSKPALKLRS). Residues 87-416 (WPLTVLYYLL…IRFGEALGSL (330 aa)) are Mitochondrial intermembrane-facing. Residues Asp-198, His-274, and Ser-385 each act as charge relay system; for autoendoproteolytic cleavage activity in the active site. The Schiff-base intermediate with substrate; via pyruvic acid; for decarboxylase activity role is filled by Ser-385. Ser-385 is subject to Pyruvic acid (Ser); by autocatalysis.

The protein belongs to the phosphatidylserine decarboxylase family. PSD-B subfamily. Eukaryotic type I sub-subfamily. Heterodimer of a large membrane-associated beta subunit and a small pyruvoyl-containing alpha subunit. Pyruvate is required as a cofactor. Post-translationally, is synthesized initially as an inactive proenzyme. Formation of the active enzyme involves a self-maturation process in which the active site pyruvoyl group is generated from an internal serine residue via an autocatalytic post-translational modification. Two non-identical subunits are generated from the proenzyme in this reaction, and the pyruvate is formed at the N-terminus of the alpha chain, which is derived from the carboxyl end of the proenzyme. The autoendoproteolytic cleavage occurs by a canonical serine protease mechanism, in which the side chain hydroxyl group of the serine supplies its oxygen atom to form the C-terminus of the beta chain, while the remainder of the serine residue undergoes an oxidative deamination to produce ammonia and the pyruvoyl prosthetic group on the alpha chain. During this reaction, the Ser that is part of the protease active site of the proenzyme becomes the pyruvoyl prosthetic group, which constitutes an essential element of the active site of the mature decarboxylase.

The protein resides in the mitochondrion inner membrane. Its subcellular location is the cytoplasm. The protein localises to the lipid droplet. The enzyme catalyses a 1,2-diacyl-sn-glycero-3-phospho-L-serine + H(+) = a 1,2-diacyl-sn-glycero-3-phosphoethanolamine + CO2. It functions in the pathway phospholipid metabolism; phosphatidylethanolamine biosynthesis. Its function is as follows. Catalyzes the formation of phosphatidylethanolamine (PtdEtn) from phosphatidylserine (PtdSer). Plays a central role in phospholipid metabolism and in the interorganelle trafficking of phosphatidylserine. May be involved in lipid droplet biogenesis at the endoplasmic reticulum membrane. The polypeptide is Phosphatidylserine decarboxylase proenzyme, mitochondrial (Bos taurus (Bovine)).